The primary structure comprises 363 residues: MTKRILMLEDGNYFIGDAIGSEKETIGEVVFNTGMTGYQETITDPSYYGQIITFTYPLVGNYGVNRDDFESINPAVKGVVVREAAEFASNWRNQITLNEFLKEKGIPGIAGIDTRKLTKLIRKEGTLKGILAAETADKEELLHHLRSVRLPVDQVHEVSSAKAFASPGDGKRVVLVDYGVKSSILRELNKRNCYVTVVPYNTSAEEILAMHPDGVMLSNGPGDPKDVPEALEMIRGIQGKLPLFGICLGHQLFALANGADTFKLKFGHRGANHPVKELATGRVDFTAQNHGYAVEKDSLIGTDLKVTHIELNDETVEGLAHKEYPAYTVQYHPEANPGPSDVNYLFDEFMEMMNGKEEGELHA.

The segment at 1-172 is CPSase; sequence MTKRILMLED…AFASPGDGKR (172 aa). S46, G220, and G222 together coordinate L-glutamine. One can recognise a Glutamine amidotransferase type-1 domain in the interval 172 to 359; sequence RVVLVDYGVK…MEMMNGKEEG (188 aa). The Nucleophile role is filled by C247. Positions 248, 251, 289, 291, and 292 each coordinate L-glutamine. Active-site residues include H332 and E334.

This sequence belongs to the CarA family. As to quaternary structure, composed of two chains; the small (or glutamine) chain promotes the hydrolysis of glutamine to ammonia, which is used by the large (or ammonia) chain to synthesize carbamoyl phosphate. Tetramer of heterodimers (alpha,beta)4.

The catalysed reaction is hydrogencarbonate + L-glutamine + 2 ATP + H2O = carbamoyl phosphate + L-glutamate + 2 ADP + phosphate + 2 H(+). It carries out the reaction L-glutamine + H2O = L-glutamate + NH4(+). The protein operates within amino-acid biosynthesis; L-arginine biosynthesis; carbamoyl phosphate from bicarbonate: step 1/1. Its pathway is pyrimidine metabolism; UMP biosynthesis via de novo pathway; (S)-dihydroorotate from bicarbonate: step 1/3. In terms of biological role, small subunit of the glutamine-dependent carbamoyl phosphate synthetase (CPSase). CPSase catalyzes the formation of carbamoyl phosphate from the ammonia moiety of glutamine, carbonate, and phosphate donated by ATP, constituting the first step of 2 biosynthetic pathways, one leading to arginine and/or urea and the other to pyrimidine nucleotides. The small subunit (glutamine amidotransferase) binds and cleaves glutamine to supply the large subunit with the substrate ammonia. The sequence is that of Carbamoyl phosphate synthase small chain from Listeria monocytogenes serovar 1/2a (strain ATCC BAA-679 / EGD-e).